The chain runs to 2090 residues: Non-reducing polyketide synthase rdc1 (2090 aa).

Positions Phe-12–His-250 are N-terminal acylcarrier protein transacylase (SAT) domain. Residues Thr-375–Asp-808 form the Ketosynthase family 3 (KS3) domain. Catalysis depends on for beta-ketoacyl synthase activity residues Cys-551, His-686, and His-726. Residues Ile-912–Ala-1195 form a malonyl-CoA:ACP transacylase (MAT) domain region. The active-site For acyl/malonyl transferase activity is the Ser-1003. The N-terminal hotdog fold stretch occupies residues Gln-1293 to Leu-1433. In terms of domain architecture, PKS/mFAS DH spans Gln-1293–Gln-1607. The product template (PT) domain stretch occupies residues Gly-1304–Ala-1604. Residues Gln-1459–Gln-1607 form a C-terminal hotdog fold region. Residues Ser-1615–Asp-1650 form a disordered region. Over residues Arg-1638 to Val-1649 the composition is skewed to basic and acidic residues. The region spanning Val-1649–Thr-1726 is the Carrier domain. Ser-1686 bears the O-(pantetheine 4'-phosphoryl)serine mark. A thioesterase (TE) domain region spans residues Ala-1820 to Ala-1964.

Its pathway is secondary metabolite biosynthesis. Non-reducing polyketide synthase; part of the gene cluster that mediates the biosynthesis of radicicol, a resorcylic acid lactone (RAL) that irreversibly inhibits the HSP90 molecular chaperone, an important target for cancer chemotherapy. The radicicol cluster encodes only two apparent post-PKS enzymes, a cytochrome P450 monooxygenase (rdc4) and a non-heme halogenase (rdc2) that could introduce the epoxide and the chlorine, respectively. If this cluster includes all the genes required for radicicol biosynthesis, the remaining structural features of radicicol are presumably generated by the PKSs rdc1 and rdc5. The C-2' ketone could arise if the R-PKS rdc5 and NR-PKS rdc1 each carry out four iterations, in contrast to the five iteration-three iteration split for the hypothemycin PKSs. The origin of the cis 5',6' double bond is not known. The radicicol R-PKS rdc5 ER domain may catalyze either double bond isomerization or reduction in the third iteration. This is Non-reducing polyketide synthase rdc1 from Metacordyceps chlamydosporia (Nematophagous fungus).